The sequence spans 212 residues: Nuclear phosphoprotein UL3 homolog (212 aa).

It belongs to the alphaherpesvirinae HHV-1 UL3 family. Post-translationally, phosphorylated.

It localises to the host nucleus. This Equus caballus (Horse) protein is Nuclear phosphoprotein UL3 homolog.